We begin with the raw amino-acid sequence, 309 residues long: Homoserine O-acetyltransferase (309 aa).

C142 serves as the catalytic Acyl-thioester intermediate. The substrate site is built by K163 and S192. The active-site Proton acceptor is H235. Residue E237 is part of the active site. R249 contacts substrate.

This sequence belongs to the MetA family.

It localises to the cytoplasm. It carries out the reaction L-homoserine + acetyl-CoA = O-acetyl-L-homoserine + CoA. The protein operates within amino-acid biosynthesis; L-methionine biosynthesis via de novo pathway; O-acetyl-L-homoserine from L-homoserine: step 1/1. Its function is as follows. Transfers an acetyl group from acetyl-CoA to L-homoserine, forming acetyl-L-homoserine. The protein is Homoserine O-acetyltransferase of Petrotoga mobilis (strain DSM 10674 / SJ95).